Here is an 888-residue protein sequence, read N- to C-terminus: Alanine--tRNA ligase (888 aa).

4 residues coordinate Zn(2+): H564, H568, C676, and H680.

It belongs to the class-II aminoacyl-tRNA synthetase family. Zn(2+) is required as a cofactor.

The protein localises to the cytoplasm. The enzyme catalyses tRNA(Ala) + L-alanine + ATP = L-alanyl-tRNA(Ala) + AMP + diphosphate. Catalyzes the attachment of alanine to tRNA(Ala) in a two-step reaction: alanine is first activated by ATP to form Ala-AMP and then transferred to the acceptor end of tRNA(Ala). Also edits incorrectly charged Ser-tRNA(Ala) and Gly-tRNA(Ala) via its editing domain. The protein is Alanine--tRNA ligase of Mesorhizobium japonicum (strain LMG 29417 / CECT 9101 / MAFF 303099) (Mesorhizobium loti (strain MAFF 303099)).